A 560-amino-acid polypeptide reads, in one-letter code: Protein DA1-related 7 (560 aa).

UIM domains lie at 43–62 (SEAD…QETS), 92–111 (EEDQ…KGKS), and 155–174 (NEDA…KGQI). One can recognise an LIM zinc-binding domain in the interval 199–269 (SICDGCKSAI…HVCKKKFPGR (71 aa)).

Interacts with ubiquitin.

In terms of biological role, ubiquitin receptor that probably regulates developmental process. The chain is Protein DA1-related 7 (DAR7) from Arabidopsis thaliana (Mouse-ear cress).